Consider the following 428-residue polypeptide: Trigger factor (428 aa).

In terms of domain architecture, PPIase FKBP-type spans Gly163 to Pro248.

It belongs to the FKBP-type PPIase family. Tig subfamily.

The protein resides in the cytoplasm. The enzyme catalyses [protein]-peptidylproline (omega=180) = [protein]-peptidylproline (omega=0). Its function is as follows. Involved in protein export. Acts as a chaperone by maintaining the newly synthesized protein in an open conformation. Functions as a peptidyl-prolyl cis-trans isomerase. The polypeptide is Trigger factor (Alkaliphilus metalliredigens (strain QYMF)).